A 232-amino-acid polypeptide reads, in one-letter code: uncharacterized protein (232 aa).

This is an uncharacterized protein from Escherichia coli (strain K12).